A 69-amino-acid chain; its full sequence is Trypsin/subtilisin inhibitor (69 aa).

C4 and C49 are disulfide-bonded.

The protein belongs to the protease inhibitor I13 (potato type I serine protease inhibitor) family.

Inhibitor of trypsin, chymotrypsin, subtilisin, etc. In Amaranthus caudatus (Love-lies-bleeding), this protein is Trypsin/subtilisin inhibitor.